The primary structure comprises 361 residues: Spermatogenesis-associated protein 17 (361 aa).

IQ domains are found at residues 32 to 61, 55 to 84, and 91 to 120; these read ENDA…IVTI, LNRI…VAYY, and YNAM…LKEY.

It localises to the cytoplasm. The protein is Spermatogenesis-associated protein 17 (SPATA17) of Homo sapiens (Human).